The sequence spans 519 residues: Amphoterin-induced protein 2 (519 aa).

The N-terminal stretch at 1–38 (MSLRFHTLPTLPRAVKPGCRELLCLLVIAVMVSPSASG) is a signal peptide. Residues 39-67 (MCPTACICATDIVSCTNKNLSKVPGNLFR) form the LRRNT domain. At 39–397 (MCPTACICAT…RSHAHEAFNT (359 aa)) the chain is on the extracellular side. 2 disulfides stabilise this stretch: cysteine 40–cysteine 46 and cysteine 44–cysteine 53. N-linked (GlcNAc...) asparagine glycosylation is present at asparagine 57. 6 LRR repeats span residues 68 to 89 (LIKR…WIPV), 93 to 114 (KLST…SFST), 117 to 138 (NLKC…TFQE), 141 to 162 (ALEV…AFGG), 165 to 186 (HLQK…LYTG), and 192 to 213 (DLTF…HINL). Asparagine 103 carries an N-linked (GlcNAc...) asparagine glycan. One can recognise an LRRCT domain in the interval 227-283 (NPFVCDCSLYSLLIFWYRRHFSSVMDFKNDYTCRLWSDSRHSHQLQLLQESFLNCSY). 2 cysteine pairs are disulfide-bonded: cysteine 231-cysteine 259 and cysteine 233-cysteine 281. Asparagine 280, asparagine 287, asparagine 344, asparagine 372, asparagine 380, asparagine 383, and asparagine 387 each carry an N-linked (GlcNAc...) asparagine glycan. Residues 288-378 (GSFHALGFIH…RLLNETVDIM (91 aa)) enclose the Ig-like C2-type domain. A disulfide bond links cysteine 309 and cysteine 362. Residues 398 to 418 (AFTTLAACVASIVLVLLYLYL) form a helical membrane-spanning segment. Residues 419–519 (TPCPCKCKAK…FSDTPFVAST (101 aa)) lie on the Cytoplasmic side of the membrane. The disordered stretch occupies residues 498–519 (RAKSDSDSVNSVFSDTPFVAST).

The protein belongs to the immunoglobulin superfamily. AMIGO family. As to quaternary structure, binds itself as well as AMIGO1 and AMIGO3. Highest level in cerebellum, retina, liver, and lung. Lower levels in cerebrum, kidney, small intestine, spleen and testis.

The protein localises to the cell membrane. Its subcellular location is the nucleus. Required for depolarization-dependent survival of cultured cerebellar granule neurons. May mediate homophilic as well as heterophilic cell-cell interaction with AMIGO1 or AMIGO3. May contribute to signal transduction through its intracellular domain. The chain is Amphoterin-induced protein 2 from Mus musculus (Mouse).